The chain runs to 73 residues: MSLELLSKLETKIQATLETIELLKMELEEEKQKASTLSEQNQQLTEQNQQLQQELASWNDKVTGLVGLLNSEI.

Residues 3–67 are a coiled coil; the sequence is LELLSKLETK…WNDKVTGLVG (65 aa).

This sequence belongs to the ZapB family. Homodimer. The ends of the coiled-coil dimer bind to each other, forming polymers. Interacts with FtsZ.

The protein localises to the cytoplasm. Its function is as follows. Non-essential, abundant cell division factor that is required for proper Z-ring formation. It is recruited early to the divisome by direct interaction with FtsZ, stimulating Z-ring assembly and thereby promoting cell division earlier in the cell cycle. Its recruitment to the Z-ring requires functional FtsA or ZipA. The polypeptide is Cell division protein ZapB (Shewanella sp. (strain MR-4)).